Reading from the N-terminus, the 274-residue chain is MSNDALEAAIESAWEIRDQITPATRGEVRDAVEATLEALDKGVLRVAEKRGSDWHVNQWAKKAVLLGFRLKDMEVHMGGPQGGTWWDKVDSKFAHWGEAQWQAAGFRAVPNCVVRRSAYIAKGVVLMPSFVNLGAYVDEGTMVDTWATVGSCAQIGKNVHLSGGVGIGGVLEPMQAGPTIIEDNCFIGARSEVVEGCIVREGSVLGMGVFIGKSTKIVDRETGEVMYGEVPAGSVVVAGSMPSKNGVNLYCAVIVKRVDAQTRSKTSINELLRD.

Residues arginine 107 and aspartate 144 each contribute to the substrate site.

It belongs to the transferase hexapeptide repeat family. In terms of assembly, homotrimer.

The protein localises to the cytoplasm. It carries out the reaction (S)-2,3,4,5-tetrahydrodipicolinate + succinyl-CoA + H2O = (S)-2-succinylamino-6-oxoheptanedioate + CoA. Its pathway is amino-acid biosynthesis; L-lysine biosynthesis via DAP pathway; LL-2,6-diaminopimelate from (S)-tetrahydrodipicolinate (succinylase route): step 1/3. The sequence is that of 2,3,4,5-tetrahydropyridine-2,6-dicarboxylate N-succinyltransferase from Paracoccus denitrificans (strain Pd 1222).